The following is a 427-amino-acid chain: O-methyltransferase sol2 (427 aa).

Asp-281 contributes to the S-adenosyl-L-methionine binding site. His-327 (proton acceptor) is an active-site residue.

This sequence belongs to the class I-like SAM-binding methyltransferase superfamily. Cation-independent O-methyltransferase family. COMT subfamily.

The protein operates within phytotoxin biosynthesis. O-methyltransferase; part of the gene cluster that mediates the biosynthesis of the phytotoxin solanapyrone, a causal agent of early blight disease of potato and tomato. The prosolanapyrone synthase sol1 is a polyketide synthase that produces the octaketide desmethylprosolanapyrone I via sequential condensations of 7 malonyl-CoA units with one acetyl-CoA unit, and one methylation step. The octaketide backbone is further methylated by the sol2 O-methyltransferase to yield prosolanapyrone I. Prosolanapyrone I is hydroxylated to prosolanapyrone II by the cytochrome P450 monooxygenase sol6. The solanapyrone synthase sol5 then catalyzes the oxidation of prosolanapyrone II and the subsequent Diels Alder cycloisomerization of the product prosolanapyrone III to solanapyrones A and D. Solanapyrones A and D are then converted into solanapyrones B and E, respectively, by the sol3 dehydrogenase. This is O-methyltransferase sol2 (sol2) from Alternaria solani.